Reading from the N-terminus, the 36-residue chain is Protein P4 (36 aa).

Residues 13–33 (GLQLSLLICACLLAVLIVSFC) form a helical membrane-spanning segment.

It is found in the host membrane. This is Protein P4 from Vitis vinifera (Grape).